The following is a 673-amino-acid chain: Estrogen receptor beta (673 aa).

Positions 1 to 181 (MASSPGLDPH…SAVGKADMHF (181 aa)) are modulating. 2 NR C4-type zinc fingers span residues 182–202 (CAVC…CEGC) and 218–242 (CPAT…LRKC). Residues 182 to 247 (CAVCHDYASG…RLRKCYEVGM (66 aa)) constitute a DNA-binding region (nuclear receptor). In terms of domain architecture, NR LBD spans 316 to 552 (SPEEFISRIM…DLLLEMLDAN (237 aa)). Residues 553–602 (TSSGGSQPSSSPSSETYSDQHQYPQPPSHLHPGSEQTTADHAIVPPLGPT) form a disordered region. Residues 554 to 566 (SSGGSQPSSSPSS) are compositionally biased toward low complexity.

It belongs to the nuclear hormone receptor family. NR3 subfamily. Binds DNA as a homodimer. Can form a heterodimer with ER-alpha. Abundant in the liver and testes, less abundant in the ovary and barely detectable in the muscle.

The protein resides in the nucleus. Its function is as follows. Binds estrogens with an affinity similar to that of ER-alpha, and activates expression of reporter genes containing estrogen response elements (ERE) in an estrogen-dependent manner. The protein is Estrogen receptor beta (esr2) of Micropogonias undulatus (Atlantic croaker).